The following is a 122-amino-acid chain: Large ribosomal subunit protein uL14 (122 aa).

The protein belongs to the universal ribosomal protein uL14 family. Part of the 50S ribosomal subunit. Forms a cluster with proteins L3 and L19. In the 70S ribosome, L14 and L19 interact and together make contacts with the 16S rRNA in bridges B5 and B8.

In terms of biological role, binds to 23S rRNA. Forms part of two intersubunit bridges in the 70S ribosome. The polypeptide is Large ribosomal subunit protein uL14 (Shewanella amazonensis (strain ATCC BAA-1098 / SB2B)).